A 132-amino-acid chain; its full sequence is Fluoride-specific ion channel FluC 2 (132 aa).

4 consecutive transmembrane segments (helical) span residues 5–25 (VAVF…NLLG), 34–54 (TFIE…FFAA), 59–79 (PLVQ…MSAF), and 95–115 (VLYL…GIVI). 2 residues coordinate Na(+): glycine 71 and threonine 74.

Belongs to the fluoride channel Fluc/FEX (TC 1.A.43) family.

It localises to the cell membrane. It carries out the reaction fluoride(in) = fluoride(out). With respect to regulation, na(+) is not transported, but it plays an essential structural role and its presence is essential for fluoride channel function. In terms of biological role, fluoride-specific ion channel. Important for reducing fluoride concentration in the cell, thus reducing its toxicity. The protein is Fluoride-specific ion channel FluC 2 of Bacillus licheniformis (strain ATCC 14580 / DSM 13 / JCM 2505 / CCUG 7422 / NBRC 12200 / NCIMB 9375 / NCTC 10341 / NRRL NRS-1264 / Gibson 46).